The following is a 140-amino-acid chain: Sex-regulated protein janus-B (140 aa).

Position 42 (arginine 42) interacts with substrate. Histidine 69 (proton acceptor) is an active-site residue. 110–112 serves as a coordination point for substrate; the sequence is CKT.

It belongs to the janus family.

In terms of biological role, janA and janB regulate somatic sex differentiation. In Drosophila pseudoobscura pseudoobscura (Fruit fly), this protein is Sex-regulated protein janus-B (janB).